The sequence spans 203 residues: MPTMSRPALDVKGGTTSGKEDANQEMNSLAYSNLGVKDRKAVTVLHYPGVTANGAKANGVPTSSSGSTSPIGSPTATPSSKPPSFNLHPTPHLMASMQLQKLNSQYQGAAATAAAALTGAGLPGEEEPMQNWVTAPLVVGGSPGSVSPPAGAQSPALIDSDPVDEEVLMSLVVELGLDRANELPELWLGQNEFDFTADFPSGC.

Disordered stretches follow at residues 1–24 (MPTM…DANQ) and 51–86 (TANG…PSFN). The span at 61–84 (PTSSSGSTSPIGSPTATPSSKPPS) shows a compositional bias: low complexity. The Nuclear export signal signature appears at 168–177 (LMSLVVELGL).

It belongs to the CITED family. Homodimer. Binds to RBM14. Interacts (via N-terminus) with HSPA8; the interaction suppresses the association of CITED1 with p300/CBP and SMAD-mediated transcription transactivation. Interacts (via C-terminus) with TOX3 (via HGM box); the interaction increases estrogen-response element (ERE)-dependent transcription and protection against cell death. Interacts with ESR1; the interaction occurs in a estrogen-dependent manner. Interacts (unphosphorylated form preferentially and via C-terminus) with EP300. Interacts (via C-terminus) with CREBBP. Interacts with EGR2. In terms of processing, phosphorylated. Phosphorylation changes in a cell cycle-dependent manner and reduces its transcriptional cofactor activity. As to expression, expressed in calvarial osteoblasts. Expressed in nulliparous mammary epithelial cells; absent in pregnant mice and in lacting mammary glands. Also expressed in mammary tumors (at protein level). Expressed only in melanocytes and testis. Expressed at high levels in the strongly pigmented melanoma cells but at low levels in the weakly pigmented cells.

Its subcellular location is the nucleus. The protein localises to the cytoplasm. Transcriptional coactivator of the p300/CBP-mediated transcription complex. Enhances SMAD-mediated transcription by strengthening the functional link between the DNA-binding SMAD transcription factors and the p300/CBP transcription coactivator complex. Stimulates estrogen-dependent transactivation activity mediated by estrogen receptors signaling; stabilizes the interaction of estrogen receptor ESR1 and histone acetyltransferase EP300. Positively regulates TGF-beta signaling through its association with the SMAD/p300/CBP-mediated transcriptional coactivator complex. Induces transcription from estrogen-responsive promoters and protection against cell death. Potentiates EGR2-mediated transcriptional activation activity from the ERBB2 promoter. Acts as an inhibitor of osteoblastic mineralization through a cAMP-dependent parathyroid hormone receptor signaling. May play a role in pigmentation of melanocytes. Associates with chromatin to the estrogen-responsive TGF-alpha promoter region in a estrogen-dependent manner. The chain is Cbp/p300-interacting transactivator 1 (Cited1) from Mus musculus (Mouse).